The following is a 372-amino-acid chain: Phenylalanine--tRNA ligase alpha subunit (372 aa).

Residue Glu-276 coordinates Mg(2+).

It belongs to the class-II aminoacyl-tRNA synthetase family. Phe-tRNA synthetase alpha subunit type 1 subfamily. As to quaternary structure, tetramer of two alpha and two beta subunits. The cofactor is Mg(2+).

Its subcellular location is the cytoplasm. The enzyme catalyses tRNA(Phe) + L-phenylalanine + ATP = L-phenylalanyl-tRNA(Phe) + AMP + diphosphate + H(+). In Thermobifida fusca (strain YX), this protein is Phenylalanine--tRNA ligase alpha subunit.